The primary structure comprises 160 residues: Nucleotide-binding protein Ping_2261 (160 aa).

It belongs to the YajQ family.

Nucleotide-binding protein. This Psychromonas ingrahamii (strain DSM 17664 / CCUG 51855 / 37) protein is Nucleotide-binding protein Ping_2261.